A 203-amino-acid chain; its full sequence is Large ribosomal subunit protein uL22 (203 aa).

Over residues 138-167 the composition is skewed to polar residues; that stretch reads PENTQSGALSQQSQAEQPQNDPENGVDSQL. The interval 138 to 203 is disordered; that stretch reads PENTQSGALS…TVLAQEKEVK (66 aa). The segment covering 168–177 has biased composition (low complexity); it reads SAKTNSTTTA. Residues 183–196 are compositionally biased toward polar residues; that stretch reads ADNSTKNDATNTVL.

This sequence belongs to the universal ribosomal protein uL22 family. Part of the 50S ribosomal subunit.

This protein binds specifically to 23S rRNA; its binding is stimulated by other ribosomal proteins, e.g. L4, L17, and L20. It is important during the early stages of 50S assembly. It makes multiple contacts with different domains of the 23S rRNA in the assembled 50S subunit and ribosome. Its function is as follows. The globular domain of the protein is located near the polypeptide exit tunnel on the outside of the subunit, while an extended beta-hairpin is found that lines the wall of the exit tunnel in the center of the 70S ribosome. In Mesomycoplasma hyopneumoniae (strain 7448) (Mycoplasma hyopneumoniae), this protein is Large ribosomal subunit protein uL22.